A 299-amino-acid polypeptide reads, in one-letter code: ATP phosphoribosyltransferase (299 aa).

This sequence belongs to the ATP phosphoribosyltransferase family. Long subfamily. Equilibrium between an active dimeric form, an inactive hexameric form and higher aggregates. Interconversion between the various forms is largely reversible and is influenced by the natural substrates and inhibitors of the enzyme. The cofactor is Mg(2+).

The protein localises to the cytoplasm. It catalyses the reaction 1-(5-phospho-beta-D-ribosyl)-ATP + diphosphate = 5-phospho-alpha-D-ribose 1-diphosphate + ATP. It participates in amino-acid biosynthesis; L-histidine biosynthesis; L-histidine from 5-phospho-alpha-D-ribose 1-diphosphate: step 1/9. Feedback inhibited by histidine. In terms of biological role, catalyzes the condensation of ATP and 5-phosphoribose 1-diphosphate to form N'-(5'-phosphoribosyl)-ATP (PR-ATP). Has a crucial role in the pathway because the rate of histidine biosynthesis seems to be controlled primarily by regulation of HisG enzymatic activity. The sequence is that of ATP phosphoribosyltransferase from Buchnera aphidicola subsp. Acyrthosiphon pisum (strain 5A).